Consider the following 364-residue polypeptide: Biotin synthase (364 aa).

A disordered region spans residues 14–36 (DTIPPGTETPYASPSHARTEEAP). Residues 70-308 (RKGPLATTCG…QRDILVCGGR (239 aa)) enclose the Radical SAM core domain. 3 residues coordinate [4Fe-4S] cluster: Cys88, Cys92, and Cys95. The [2Fe-2S] cluster site is built by Cys164 and Cys233.

It belongs to the radical SAM superfamily. Biotin synthase family. As to quaternary structure, homodimer. The cofactor is [4Fe-4S] cluster. It depends on [2Fe-2S] cluster as a cofactor.

It catalyses the reaction (4R,5S)-dethiobiotin + (sulfur carrier)-SH + 2 reduced [2Fe-2S]-[ferredoxin] + 2 S-adenosyl-L-methionine = (sulfur carrier)-H + biotin + 2 5'-deoxyadenosine + 2 L-methionine + 2 oxidized [2Fe-2S]-[ferredoxin]. It functions in the pathway cofactor biosynthesis; biotin biosynthesis; biotin from 7,8-diaminononanoate: step 2/2. Its function is as follows. Catalyzes the conversion of dethiobiotin (DTB) to biotin by the insertion of a sulfur atom into dethiobiotin via a radical-based mechanism. This chain is Biotin synthase, found in Nitratidesulfovibrio vulgaris (strain DSM 19637 / Miyazaki F) (Desulfovibrio vulgaris).